The sequence spans 122 residues: Large ribosomal subunit protein uL14 (122 aa).

The protein belongs to the universal ribosomal protein uL14 family. In terms of assembly, part of the 50S ribosomal subunit. Forms a cluster with proteins L3 and L19. In the 70S ribosome, L14 and L19 interact and together make contacts with the 16S rRNA in bridges B5 and B8. Can interact with ribosomal silencing factor RsfS, which may inhibit ribosomal subunit association.

Binds to 23S rRNA. Forms part of two intersubunit bridges in the 70S ribosome. In Synechocystis sp. (strain ATCC 27184 / PCC 6803 / Kazusa), this protein is Large ribosomal subunit protein uL14.